We begin with the raw amino-acid sequence, 202 residues long: Transcriptional regulator GfcR 2 (202 aa).

The protein belongs to the purine/pyrimidine phosphoribosyltransferase family. GfcR subfamily.

This is Transcriptional regulator GfcR 2 from Methanosarcina barkeri (strain Fusaro / DSM 804).